Here is a 376-residue protein sequence, read N- to C-terminus: TraB domain-containing protein (376 aa).

Residue methionine 1 is modified to N-acetylmethionine. A disordered region spans residues methionine 1–proline 34. A compositionally biased stretch (low complexity) spans valine 14 to proline 27. Residue threonine 65 is modified to Phosphothreonine.

This is TraB domain-containing protein (TRABD) from Homo sapiens (Human).